The primary structure comprises 332 residues: Beta-ketoacyl-[acyl-carrier-protein] synthase III (332 aa).

Residues Cys114 and His255 contribute to the active site. An ACP-binding region spans residues 256 to 260 (QANLR). Asn285 is a catalytic residue.

The protein belongs to the thiolase-like superfamily. FabH family. In terms of assembly, homodimer.

Its subcellular location is the cytoplasm. It carries out the reaction malonyl-[ACP] + acetyl-CoA + H(+) = 3-oxobutanoyl-[ACP] + CO2 + CoA. Its pathway is lipid metabolism; fatty acid biosynthesis. Catalyzes the condensation reaction of fatty acid synthesis by the addition to an acyl acceptor of two carbons from malonyl-ACP. Catalyzes the first condensation reaction which initiates fatty acid synthesis and may therefore play a role in governing the total rate of fatty acid production. Possesses both acetoacetyl-ACP synthase and acetyl transacylase activities. Its substrate specificity determines the biosynthesis of branched-chain and/or straight-chain of fatty acids. The sequence is that of Beta-ketoacyl-[acyl-carrier-protein] synthase III from Sulfurimonas denitrificans (strain ATCC 33889 / DSM 1251) (Thiomicrospira denitrificans (strain ATCC 33889 / DSM 1251)).